Reading from the N-terminus, the 342-residue chain is Methionyl-tRNA formyltransferase (342 aa).

Position 119-122 (119-122 (SILP)) interacts with (6S)-5,6,7,8-tetrahydrofolate.

It belongs to the Fmt family.

The catalysed reaction is L-methionyl-tRNA(fMet) + (6R)-10-formyltetrahydrofolate = N-formyl-L-methionyl-tRNA(fMet) + (6S)-5,6,7,8-tetrahydrofolate + H(+). Attaches a formyl group to the free amino group of methionyl-tRNA(fMet). The formyl group appears to play a dual role in the initiator identity of N-formylmethionyl-tRNA by promoting its recognition by IF2 and preventing the misappropriation of this tRNA by the elongation apparatus. The polypeptide is Methionyl-tRNA formyltransferase (Nostoc sp. (strain PCC 7120 / SAG 25.82 / UTEX 2576)).